The sequence spans 1082 residues: RNA-directed RNA polymerase (1082 aa).

The RdRp catalytic domain maps to 498–670 (LSYGDVTRYL…ALASLTGCEI (173 aa)).

The protein belongs to the reoviridae RNA-directed RNA polymerase family. As to quaternary structure, interacts with VP3 (Potential). Interacts with VP2; this interaction activates VP1. Interacts with NSP5; this interaction is probably necessary for the formation of functional virus factories. Interacts with NSP2; this interaction is weak. Mg(2+) is required as a cofactor.

The protein localises to the virion. It catalyses the reaction RNA(n) + a ribonucleoside 5'-triphosphate = RNA(n+1) + diphosphate. In terms of biological role, RNA-directed RNA polymerase that is involved in both transcription and genome replication. Together with VP3 capping enzyme, forms an enzyme complex positioned near the channels situated at each of the five-fold vertices of the core. Following infection, the outermost layer of the virus is lost, leaving a double-layered particle (DLP) made up of the core and VP6 shell. VP1 then catalyzes the transcription of fully conservative plus-strand genomic RNAs that are extruded through the DLP's channels into the cytoplasm where they function as mRNAs for translation of viral proteins. One copy of each of the viral (+)RNAs is also recruited during core assembly, together with newly synthesized polymerase complexes and VP2. The polymerase of these novo-formed particles catalyzes the synthesis of complementary minus-strands leading to dsDNA formation. To do so, the polymerase specifically recognizes conserved 3' sequence(s) in plus-strand RNA templates. Once dsRNA synthesis is complete, the polymerase switches to the transcriptional mode, thus providing secondary transcription. This chain is RNA-directed RNA polymerase, found in Rotavirus C (strain RVC/Pig/United States/Cowden/1980) (RV-C).